The chain runs to 253 residues: Large ribosomal subunit protein uL2C (253 aa).

It belongs to the universal ribosomal protein uL2 family. As to quaternary structure, component of the large ribosomal subunit (LSU). Mature yeast ribosomes consist of a small (40S) and a large (60S) subunit. The 40S small subunit contains 1 molecule of ribosomal RNA (18S rRNA) and at least 33 different proteins. The large 60S subunit contains 3 rRNA molecules (25S, 5.8S and 5S rRNA) and at least 46 different proteins.

The protein resides in the cytoplasm. The protein localises to the nucleus. Its function is as follows. Component of the ribosome, a large ribonucleoprotein complex responsible for the synthesis of proteins in the cell. The small ribosomal subunit (SSU) binds messenger RNAs (mRNAs) and translates the encoded message by selecting cognate aminoacyl-transfer RNA (tRNA) molecules. The large subunit (LSU) contains the ribosomal catalytic site termed the peptidyl transferase center (PTC), which catalyzes the formation of peptide bonds, thereby polymerizing the amino acids delivered by tRNAs into a polypeptide chain. The nascent polypeptides leave the ribosome through a tunnel in the LSU and interact with protein factors that function in enzymatic processing, targeting, and the membrane insertion of nascent chains at the exit of the ribosomal tunnel. This chain is Large ribosomal subunit protein uL2C (rpl803), found in Schizosaccharomyces pombe (strain 972 / ATCC 24843) (Fission yeast).